Consider the following 34-residue polypeptide: Photosystem II reaction center protein Psb30 (34 aa).

A helical membrane pass occupies residues 6–26 (VIGQLIATGAIMLAGPAVIVL).

This sequence belongs to the Psb30/Ycf12 family. In terms of assembly, PSII is composed of 1 copy each of membrane proteins PsbA, PsbB, PsbC, PsbD, PsbE, PsbF, PsbH, PsbI, PsbJ, PsbK, PsbL, PsbM, PsbT, PsbX, PsbY, PsbZ, Psb30/Ycf12, peripheral proteins of the oxygen-evolving complex and a large number of cofactors. It forms dimeric complexes.

Its subcellular location is the plastid. The protein localises to the chloroplast thylakoid membrane. A core subunit of photosystem II (PSII), probably helps stabilize the reaction center. This is Photosystem II reaction center protein Psb30 from Trieres chinensis (Marine centric diatom).